A 721-amino-acid chain; its full sequence is Vacuolar transporter chaperone complex subunit 4 (721 aa).

The 148-residue stretch at 1–148 folds into the SPX domain; sequence MKFGEHLSKS…GFILKPVFQV (148 aa). The Cytoplasmic segment spans residues 1–630; the sequence is MKFGEHLSKS…PKVYFATERT (630 aa). A Glycyl lysine isopeptide (Lys-Gly) (interchain with G-Cter in ubiquitin) cross-link involves residue Lys-75. The important for inositol polyphosphate binding stretch occupies residues 126 to 133; sequence GFQKIIKK. Residues Lys-200, Arg-264, Arg-266, Lys-281, Lys-294, Tyr-359, and Arg-361 each contribute to the ATP site. Residue Glu-426 coordinates Mn(2+). Residue Lys-458 is part of the active site. The interval 489–512 is disordered; the sequence is PLPTNIEITRPGRSDNEDNDFDED. Transmembrane regions (helical) follow at residues 631–651 and 652–672; these read YLSW…LLTY and GSPT…AVLI. Residues 673 to 699 lie on the Cytoplasmic side of the membrane; sequence RTVMVYAKRVVNIRLKRAVDYEDKIGP. Residues 700–720 traverse the membrane as a helical segment; the sequence is GMVSVFLILSILFSFFCNLVA. Lys-721 is a topological domain (vacuolar).

It belongs to the VTC4 family. As to quaternary structure, the VTC core complex is an integral membrane heterooligomer composed of the catalytic subunit VTC4 and the accessory subunits VTC1, VTC2 and VTC3. The complex exists in 2 different sub-complexes: VTC1-VTC2-VCT4 and VCT1-VTC3-VTC4. The VCT1-VTC3-VTC4 subcomplex is mostly found on the vacuolar membrane. The VTC1-VTC2-VCT4 subcomplex is observed in the cell periphery, probably ER and nuclear envelope, but localizes to the vacuole under phosphate starvation. Each subunit contains 3 transmembrane helices. VTC1 is a small membrane protein without hydrophilic domain. VTC2, VTC3 and VTC4 are related and have 2 hydrophilic domains that face the cytosol, an N-terminal SPX domain and the central core domain. The central core in VTC4 is the catalytic domain, with the essential catalytic lysine replaced by isoleucine and leucine in VTC2 and VTC3, respectively. The core complex associates with the accessory subunit VTC5. The complex interacts with the v-SNARE NYV1 and with the V(0) subunit of V-ATPase VPH1. Requires Mn(2+) as cofactor.

It localises to the vacuole membrane. The protein resides in the cytoplasm. It is found in the cell cortex. Its subcellular location is the endoplasmic reticulum membrane. The protein localises to the cytoplasmic vesicle. It localises to the autophagosome membrane. The catalysed reaction is [phosphate](n) + ATP = [phosphate](n+1) + ADP. With respect to regulation, activity of the enzyme is Mn(2+)-dependent and enhanced in the presence of pyrophosphate (PPi). In terms of biological role, catalytic subunit of the vacuolar transporter chaperone (VTC) complex. The VTC complex acts as a vacuolar polyphosphate polymerase that catalyzes the synthesis of inorganic polyphosphate (polyP) via transfer of phosphate from ATP to a growing polyP chain, releasing ADP. VTC exposes its catalytic domain VTC4 to the cytosol, where the growing polyP chain winds through a tunnel-shaped pocket, integrating cytoplasmic polymer synthesis with polyP membrane translocation. The VTC complex carries 9 vacuolar transmembrane domains, which are likely to constitute the translocation channel into the organelle lumen. PolyP synthesis is tightly coupled to its transport into the vacuole lumen, in order to avoid otherwise toxic intermediates in the cytosol, and it depends on the proton gradient across the membrane, formed by V-ATPase. The VTC complex also plays a role in vacuolar membrane fusion. Required for SEC18/NSF activity in SNARE priming, membrane binding of LMA1 and V(0) trans-complex formation. Binds inositol hexakisphosphate (Ins6P) and similar inositol polyphosphates, such as 5-diphospho-inositol pentakisphosphate (5-InsP7); these are important intracellular signaling molecules. Inositol polyphosphate binding promotes vacuolar polyphosphate synthesis. The VTC complex is required for microautophagy. It is a constituent of autophagic tubes and is required for scission of microautophagic vesicles from these tubes. In Saccharomyces cerevisiae (strain ATCC 204508 / S288c) (Baker's yeast), this protein is Vacuolar transporter chaperone complex subunit 4.